A 415-amino-acid chain; its full sequence is Lupus La protein homolog (415 aa).

Residues 7 to 99 (NEKMTALEAK…RRSPSRPLPE (93 aa)) enclose the HTH La-type RNA-binding domain. Phosphoserine occurs at positions 92 and 94. The RRM domain maps to 111–187 (RSVYIKGFPT…TNLLILFKED (77 aa)). N6-acetyllysine is present on K116. T120 is modified (phosphothreonine). Residues K128, K327, and K356 each carry the N6-acetyllysine modification. One can recognise a xRRM domain in the interval 226 to 346 (EGKMGCLLKF…GRFKGSHVFT (121 aa)). Positions 349–415 (RRFKGKGKGN…KKRENGARDK (67 aa)) are disordered. Position 377 is a phosphothreonine (T377). The span at 377–415 (TRFDDDDRRRGPMKRGRDGRDREEPASKHKKRENGARDK) shows a compositional bias: basic and acidic residues.

Interacts with DDX15. May interact with RUFY1. Phosphorylated.

The protein resides in the nucleus. Binds to the 3' poly(U) terminus of nascent RNA polymerase III transcripts, protecting them from exonuclease digestion and facilitating their folding and maturation. This chain is Lupus La protein homolog (Ssb), found in Mus musculus (Mouse).